The following is a 235-amino-acid chain: Sugar fermentation stimulation protein homolog (235 aa).

The protein belongs to the SfsA family.

In Alkaliphilus oremlandii (strain OhILAs) (Clostridium oremlandii (strain OhILAs)), this protein is Sugar fermentation stimulation protein homolog.